A 66-amino-acid chain; its full sequence is Moricin-1 (66 aa).

An N-terminal signal peptide occupies residues 1–24 (MNILKFFFVFIVAMSLVSCSTAAP).

In terms of tissue distribution, expressed in fat body and to a lesser extent in hemocyte and Malpighian tubules.

It is found in the secreted. Has antibacterial activity against Gram-positive and Gram-negative bacteria. Probably acts by disturbing membrane functions with its amphipathic structure. In Bombyx mori (Silk moth), this protein is Moricin-1 (MOR1).